The primary structure comprises 85 residues: UPF0335 protein Atu3758 (85 aa).

The protein belongs to the UPF0335 family.

The polypeptide is UPF0335 protein Atu3758 (Agrobacterium fabrum (strain C58 / ATCC 33970) (Agrobacterium tumefaciens (strain C58))).